The primary structure comprises 108 residues: RNA silencing suppressor (108 aa).

Residues 47 to 50 (RRRR) are basic. A C4-type zinc finger spans residues 57 to 78 (CHRCYRLWPPTVFTTRCDNKHC).

The protein belongs to the carlaviruses nucleic acid-binding protein family.

Suppressor of viral-induced RNA silencing. Increases the accumulation of viral RNA and enhances viral cell-to-cell movement by inhibiting RNA silencing. The chain is RNA silencing suppressor from Solanum tuberosum (Potato).